We begin with the raw amino-acid sequence, 222 residues long: MSDISDANKLKHRFRGYFPVVIDVETAGFNSQTDALLEIAVTLLKMDDEGLLGIDKTLHFNIEPFEGANLEPEALAFNGIDPTNPLRGAVSEKEAFLEIFKAVKKAQKASDCHRSIIVAHNAAFDHGFVSKAIERCDLKRSPFHPFATFDTATLAGLAIGHTVLAKACIMAGIPFDNKEAHSALYDTERTAELFCHIVNRWKQLGGWPLLAAGESEDADGEE.

The region spanning 20 to 194 (VVIDVETAGF…YDTERTAELF (175 aa)) is the Exonuclease domain. Residues Asp-23, Glu-25, His-181, and Asp-186 each coordinate Mg(2+). His-181 functions as the Proton donor/acceptor in the catalytic mechanism.

This sequence belongs to the RNase T family. In terms of assembly, homodimer. Mg(2+) serves as cofactor.

Functionally, trims short 3' overhangs of a variety of RNA species, leaving a one or two nucleotide 3' overhang. Responsible for the end-turnover of tRNA: specifically removes the terminal AMP residue from uncharged tRNA (tRNA-C-C-A). Also appears to be involved in tRNA biosynthesis. This is Ribonuclease T from Shewanella sp. (strain ANA-3).